Consider the following 767-residue polypeptide: RNA cytosine C(5)-methyltransferase NSUN2 (767 aa).

The tract at residues 1-36 is disordered; that stretch reads MGRRSRGRRLQQQQRPEDAEDGAEGGGKRGEAGWEG. Lysine 46 participates in a covalent cross-link: Glycyl lysine isopeptide (Lys-Gly) (interchain with G-Cter in SUMO2). At serine 139 the chain carries Phosphoserine; by AURKB. S-adenosyl-L-methionine contacts are provided by residues 184–190, aspartate 215, aspartate 242, and aspartate 268; that span reads CAAPGSK. Cysteine 321 serves as the catalytic Nucleophile. Residues 436-481 are disordered; the sequence is NKRQPKLQGKSAETRESTQLSPADLTEGKPTDPSKLESPSFTGTGD. Position 456 is a phosphoserine (serine 456). The segment covering 461–470 has biased composition (basic and acidic residues); that stretch reads TEGKPTDPSK. Glycyl lysine isopeptide (Lys-Gly) (interchain with G-Cter in SUMO2) cross-links involve residues lysine 464 and lysine 470. Serine 473 carries the post-translational modification Phosphoserine. Glycyl lysine isopeptide (Lys-Gly) (interchain with G-Cter in SUMO2) cross-links involve residues lysine 511 and lysine 516. Residue lysine 586 is modified to N6-acetyllysine; alternate. N6-malonyllysine; alternate is present on lysine 586. A Glycyl lysine isopeptide (Lys-Gly) (interchain with G-Cter in SUMO2); alternate cross-link involves residue lysine 586. Serine 593 carries the phosphoserine modification. Residues lysine 640, lysine 654, and lysine 660 each participate in a glycyl lysine isopeptide (Lys-Gly) (interchain with G-Cter in SUMO2) cross-link. Residue threonine 718 is modified to Phosphothreonine. The segment covering 719 to 730 has biased composition (polar residues); the sequence is NESAASTGQPDN. The interval 719–767 is disordered; the sequence is NESAASTGQPDNDVTEGQRAGEPNSPDAEEANSPDVTAGCDPAGVHPPR. Phosphoserine occurs at positions 724, 743, and 751.

This sequence belongs to the class I-like SAM-binding methyltransferase superfamily. RsmB/NOP family. TRM4 subfamily. As to quaternary structure, interacts with NPM1 and NCL during interphase; interaction is disrupted following phosphorylation at Ser-139. Post-translationally, phosphorylated at Ser-139 by AURKB during mitosis, leading to abolish methyltransferase activity and the interaction with NPM1. Expressed in adult and fetal brain and in lymphoblastoid cells.

It localises to the nucleus. Its subcellular location is the nucleolus. It is found in the cytoplasm. The protein localises to the mitochondrion. The protein resides in the cytoskeleton. It localises to the spindle. Its subcellular location is the secreted. It is found in the extracellular exosome. The enzyme catalyses cytidine(48) in tRNA + S-adenosyl-L-methionine = 5-methylcytidine(48) in tRNA + S-adenosyl-L-homocysteine + H(+). It catalyses the reaction cytidine(49) in tRNA + S-adenosyl-L-methionine = 5-methylcytidine(49) in tRNA + S-adenosyl-L-homocysteine + H(+). The catalysed reaction is cytidine(50) in tRNA + S-adenosyl-L-methionine = 5-methylcytidine(50) in tRNA + S-adenosyl-L-homocysteine + H(+). It carries out the reaction cytidine(34) in tRNA precursor + S-adenosyl-L-methionine = 5-methylcytidine(34) in tRNA precursor + S-adenosyl-L-homocysteine + H(+). The enzyme catalyses a cytidine in mRNA + S-adenosyl-L-methionine = a 5-methylcytidine in mRNA + S-adenosyl-L-homocysteine + H(+). With respect to regulation, inhibited by magnesium ions. Its function is as follows. RNA cytosine C(5)-methyltransferase that methylates cytosine to 5-methylcytosine (m5C) in various RNAs, such as tRNAs, mRNAs and some long non-coding RNAs (lncRNAs). Involved in various processes, such as epidermal stem cell differentiation, testis differentiation and maternal to zygotic transition during early development: acts by increasing protein synthesis; cytosine C(5)-methylation promoting tRNA stability and preventing mRNA decay. Methylates cytosine to 5-methylcytosine (m5C) at positions 34 and 48 of intron-containing tRNA(Leu)(CAA) precursors, and at positions 48, 49 and 50 of tRNA(Gly)(GCC) precursors. tRNA methylation is required generation of RNA fragments derived from tRNAs (tRFs). Also mediates C(5)-methylation of mitochondrial tRNAs. Catalyzes cytosine C(5)-methylation of mRNAs, leading to stabilize them and prevent mRNA decay: mRNA stabilization involves YBX1 that specifically recognizes and binds m5C-modified transcripts. Cytosine C(5)-methylation of mRNAs also regulates mRNA export: methylated transcripts are specifically recognized by THOC4/ALYREF, which mediates mRNA nucleo-cytoplasmic shuttling. Also mediates cytosine C(5)-methylation of non-coding RNAs, such as vault RNAs (vtRNAs), promoting their processing into regulatory small RNAs. Cytosine C(5)-methylation of vtRNA VTRNA1.1 promotes its processing into small-vault RNA4 (svRNA4) and regulates epidermal differentiation. May act downstream of Myc to regulate epidermal cell growth and proliferation. Required for proper spindle assembly and chromosome segregation, independently of its methyltransferase activity. This chain is RNA cytosine C(5)-methyltransferase NSUN2, found in Homo sapiens (Human).